Reading from the N-terminus, the 147-residue chain is Small ribosomal subunit protein uS12 (147 aa).

The protein belongs to the universal ribosomal protein uS12 family. In terms of assembly, part of the 30S ribosomal subunit.

Its function is as follows. With S4 and S5 plays an important role in translational accuracy. Located at the interface of the 30S and 50S subunits. This Thermofilum pendens (strain DSM 2475 / Hrk 5) protein is Small ribosomal subunit protein uS12.